The chain runs to 348 residues: Heptaprenyl diphosphate synthase component 2 (348 aa).

Isopentenyl diphosphate is bound by residues Lys-73, Arg-76, and His-105. 2 residues coordinate Mg(2+): Asp-112 and Asp-116. Residue Arg-121 coordinates all-trans-hexaprenyl diphosphate. Residue Arg-122 participates in isopentenyl diphosphate binding. The all-trans-hexaprenyl diphosphate site is built by Lys-198, Thr-199, and Gln-236.

Belongs to the FPP/GGPP synthase family. As to quaternary structure, heterodimer of component I and II. It depends on Mg(2+) as a cofactor.

The enzyme catalyses 4 isopentenyl diphosphate + (2E,6E)-farnesyl diphosphate = all-trans-heptaprenyl diphosphate + 4 diphosphate. Its function is as follows. Supplies heptaprenyl diphosphate, the precursor for the side chain of the isoprenoid quinone menaquinone-7 (MQ-7). This chain is Heptaprenyl diphosphate synthase component 2 (hepT), found in Bacillus subtilis (strain 168).